The sequence spans 214 residues: Uracil phosphoribosyltransferase (214 aa).

Residues R81, R106, and 133-141 contribute to the 5-phospho-alpha-D-ribose 1-diphosphate site; that span reads DPMLATGNS. Uracil is bound by residues I196 and 201-203; that span reads GDA. Position 202 (D202) interacts with 5-phospho-alpha-D-ribose 1-diphosphate.

The protein belongs to the UPRTase family. Mg(2+) serves as cofactor.

The enzyme catalyses UMP + diphosphate = 5-phospho-alpha-D-ribose 1-diphosphate + uracil. Its pathway is pyrimidine metabolism; UMP biosynthesis via salvage pathway; UMP from uracil: step 1/1. Its activity is regulated as follows. Allosterically activated by GTP. In terms of biological role, catalyzes the conversion of uracil and 5-phospho-alpha-D-ribose 1-diphosphate (PRPP) to UMP and diphosphate. This chain is Uracil phosphoribosyltransferase, found in Legionella pneumophila (strain Paris).